A 463-amino-acid chain; its full sequence is Argininosuccinate lyase (463 aa).

Belongs to the lyase 1 family. Argininosuccinate lyase subfamily.

Its subcellular location is the cytoplasm. It carries out the reaction 2-(N(omega)-L-arginino)succinate = fumarate + L-arginine. It functions in the pathway amino-acid biosynthesis; L-arginine biosynthesis; L-arginine from L-ornithine and carbamoyl phosphate: step 3/3. The sequence is that of Argininosuccinate lyase from Methylorubrum populi (strain ATCC BAA-705 / NCIMB 13946 / BJ001) (Methylobacterium populi).